Consider the following 722-residue polypeptide: Neprilysin-1 (722 aa).

A signal peptide spans 1-17 (MAVALLVALCVVSSRMA). Residues 32 to 722 (VCNSPVCQKA…MNPTHKCLLW (691 aa)) form the Peptidase M13 domain. 5 disulfides stabilise this stretch: C33-C38, C56-C707, C64-C667, C120-C378, and C589-C719. Residues N100, N184, N207, and N424 are each glycosylated (N-linked (GlcNAc...) asparagine). Zn(2+) is bound at residue H552. Residue E553 is part of the active site. H556 contributes to the Zn(2+) binding site. A glycan (N-linked (GlcNAc...) asparagine) is linked at N609. E614 provides a ligand contact to Zn(2+). Residue D618 is the Proton donor of the active site.

It belongs to the peptidase M13 family. Zn(2+) serves as cofactor. Contains 5 disulfide bonds. As to expression, expressed by the venom gland.

Its subcellular location is the secreted. The protein is Neprilysin-1 of Trittame loki (Brush-footed trapdoor spider).